Consider the following 277-residue polypeptide: MGIKVYKPTTNGRRNMTSLDFAEITTSTPEKSLLVSLKSKAGRNNNGRITVRHQGGGHKRHYRLIDFKRNKDGVEAVVKTIEYDPNRTANIALVHYTDGVKAYIIAPKGLEVGQRIVSGPDADIKVGNALPLANIPVGTVVHNIELKPGKGGELVRAAGASAQVLGQEGKYVLVRLQSGEVRMILGTCRATIGTVGNEQQSLVNIGKAGRSRWKGVRPTVRGSVMNPNDHPHGGGEGKAPVGRKAPSTPWGKPALGLKTRNKKAKSDKLIVRRRNEK.

Residues proline 218–lysine 277 are disordered. A compositionally biased stretch (basic and acidic residues) spans alanine 264–lysine 277.

It belongs to the universal ribosomal protein uL2 family. Part of the 50S ribosomal subunit. Forms a bridge to the 30S subunit in the 70S ribosome.

One of the primary rRNA binding proteins. Required for association of the 30S and 50S subunits to form the 70S ribosome, for tRNA binding and peptide bond formation. It has been suggested to have peptidyltransferase activity; this is somewhat controversial. Makes several contacts with the 16S rRNA in the 70S ribosome. The polypeptide is Large ribosomal subunit protein uL2 (Streptococcus pyogenes serotype M4 (strain MGAS10750)).